A 229-amino-acid polypeptide reads, in one-letter code: Enolase-phosphatase E1 (229 aa).

It belongs to the HAD-like hydrolase superfamily. MasA/MtnC family. In terms of assembly, monomer. Mg(2+) is required as a cofactor.

The enzyme catalyses 5-methylsulfanyl-2,3-dioxopentyl phosphate + H2O = 1,2-dihydroxy-5-(methylsulfanyl)pent-1-en-3-one + phosphate. The protein operates within amino-acid biosynthesis; L-methionine biosynthesis via salvage pathway; L-methionine from S-methyl-5-thio-alpha-D-ribose 1-phosphate: step 3/6. It functions in the pathway amino-acid biosynthesis; L-methionine biosynthesis via salvage pathway; L-methionine from S-methyl-5-thio-alpha-D-ribose 1-phosphate: step 4/6. In terms of biological role, bifunctional enzyme that catalyzes the enolization of 2,3-diketo-5-methylthiopentyl-1-phosphate (DK-MTP-1-P) into the intermediate 2-hydroxy-3-keto-5-methylthiopentenyl-1-phosphate (HK-MTPenyl-1-P), which is then dephosphorylated to form the acireductone 1,2-dihydroxy-3-keto-5-methylthiopentene (DHK-MTPene). In Citrobacter koseri (strain ATCC BAA-895 / CDC 4225-83 / SGSC4696), this protein is Enolase-phosphatase E1.